Reading from the N-terminus, the 240-residue chain is tRNA pseudouridine synthase A (240 aa).

Aspartate 50 functions as the Nucleophile in the catalytic mechanism. Tyrosine 109 is a binding site for substrate.

The protein belongs to the tRNA pseudouridine synthase TruA family. As to quaternary structure, homodimer.

It carries out the reaction uridine(38/39/40) in tRNA = pseudouridine(38/39/40) in tRNA. In terms of biological role, formation of pseudouridine at positions 38, 39 and 40 in the anticodon stem and loop of transfer RNAs. In Campylobacter jejuni subsp. jejuni serotype O:6 (strain 81116 / NCTC 11828), this protein is tRNA pseudouridine synthase A.